The sequence spans 348 residues: Probable purine nucleoside permease C285.05 (348 aa).

The signal sequence occupies residues M1 to A21.

The protein belongs to the NUP family.

Its subcellular location is the endoplasmic reticulum. Its function is as follows. Probable nucleoside permease that transports adenosine and guanosine. The chain is Probable purine nucleoside permease C285.05 from Schizosaccharomyces pombe (strain 972 / ATCC 24843) (Fission yeast).